A 148-amino-acid chain; its full sequence is UPF0756 membrane protein NGK_2061 (148 aa).

4 helical membrane-spanning segments follow: residues 10-32 (LVTL…ATIL), 50-70 (HGLN…LVSG), 85-105 (MISA…GVPL), and 116-136 (LLIG…GPLI).

The protein belongs to the UPF0756 family.

It localises to the cell membrane. In Neisseria gonorrhoeae (strain NCCP11945), this protein is UPF0756 membrane protein NGK_2061.